A 469-amino-acid chain; its full sequence is Sulfate adenylyltransferase subunit 1 (469 aa).

Positions 22–224 (KDLMRFITCG…NMTWYPGSPL (203 aa)) constitute a tr-type G domain. The G1 stretch occupies residues 31–38 (GSVDDGKS). 31 to 38 (GSVDDGKS) is a GTP binding site. The G2 stretch occupies residues 89–93 (GITID). Positions 110 to 113 (DTPG) are G3. Residues 110–114 (DTPGH) and 165–168 (NKMD) contribute to the GTP site. The segment at 165-168 (NKMD) is G4. The tract at residues 202–204 (SAL) is G5.

Belongs to the TRAFAC class translation factor GTPase superfamily. Classic translation factor GTPase family. CysN/NodQ subfamily. As to quaternary structure, heterodimer composed of CysD, the smaller subunit, and CysN.

It carries out the reaction sulfate + ATP + H(+) = adenosine 5'-phosphosulfate + diphosphate. It functions in the pathway sulfur metabolism; hydrogen sulfide biosynthesis; sulfite from sulfate: step 1/3. Functionally, with CysD forms the ATP sulfurylase (ATPS) that catalyzes the adenylation of sulfate producing adenosine 5'-phosphosulfate (APS) and diphosphate, the first enzymatic step in sulfur assimilation pathway. APS synthesis involves the formation of a high-energy phosphoric-sulfuric acid anhydride bond driven by GTP hydrolysis by CysN coupled to ATP hydrolysis by CysD. This chain is Sulfate adenylyltransferase subunit 1, found in Psychromonas ingrahamii (strain DSM 17664 / CCUG 51855 / 37).